Consider the following 361-residue polypeptide: L-threonine 3-dehydrogenase (361 aa).

Cysteine 38 contacts Zn(2+). Catalysis depends on charge relay system residues threonine 40 and histidine 43. Residues histidine 63, glutamate 64, cysteine 93, cysteine 96, cysteine 99, and cysteine 107 each contribute to the Zn(2+) site. NAD(+)-binding positions include isoleucine 175, aspartate 195, arginine 200, 262–264 (LGI), and 286–287 (IY).

This sequence belongs to the zinc-containing alcohol dehydrogenase family. In terms of assembly, homotetramer. Zn(2+) serves as cofactor.

It localises to the cytoplasm. The enzyme catalyses L-threonine + NAD(+) = (2S)-2-amino-3-oxobutanoate + NADH + H(+). It participates in amino-acid degradation; L-threonine degradation via oxydo-reductase pathway; glycine from L-threonine: step 1/2. Functionally, catalyzes the NAD(+)-dependent oxidation of L-threonine to 2-amino-3-ketobutyrate. This chain is L-threonine 3-dehydrogenase, found in Pectobacterium atrosepticum (strain SCRI 1043 / ATCC BAA-672) (Erwinia carotovora subsp. atroseptica).